A 299-amino-acid polypeptide reads, in one-letter code: tRNA dimethylallyltransferase (299 aa).

Gly-10 to Thr-17 is a binding site for ATP. Thr-12–Thr-17 lines the substrate pocket. Residues Asp-35–Gln-38 form an interaction with substrate tRNA region.

It belongs to the IPP transferase family. Monomer. Mg(2+) serves as cofactor.

The catalysed reaction is adenosine(37) in tRNA + dimethylallyl diphosphate = N(6)-dimethylallyladenosine(37) in tRNA + diphosphate. Functionally, catalyzes the transfer of a dimethylallyl group onto the adenine at position 37 in tRNAs that read codons beginning with uridine, leading to the formation of N6-(dimethylallyl)adenosine (i(6)A). The protein is tRNA dimethylallyltransferase of Streptococcus thermophilus (strain CNRZ 1066).